A 387-amino-acid polypeptide reads, in one-letter code: Succinate--CoA ligase [ADP-forming] subunit beta (387 aa).

The ATP-grasp domain maps to 9 to 244 (KEVLRKFGVA…LNEEEPSEIE (236 aa)). Residues lysine 46, 53 to 55 (GRG), glutamate 99, cysteine 102, and glutamate 107 contribute to the ATP site. Asparagine 199 and aspartate 213 together coordinate Mg(2+). Residues asparagine 264 and 321-323 (GIM) contribute to the substrate site.

It belongs to the succinate/malate CoA ligase beta subunit family. As to quaternary structure, heterotetramer of two alpha and two beta subunits. The cofactor is Mg(2+).

The catalysed reaction is succinate + ATP + CoA = succinyl-CoA + ADP + phosphate. It carries out the reaction GTP + succinate + CoA = succinyl-CoA + GDP + phosphate. The protein operates within carbohydrate metabolism; tricarboxylic acid cycle; succinate from succinyl-CoA (ligase route): step 1/1. In terms of biological role, succinyl-CoA synthetase functions in the citric acid cycle (TCA), coupling the hydrolysis of succinyl-CoA to the synthesis of either ATP or GTP and thus represents the only step of substrate-level phosphorylation in the TCA. The beta subunit provides nucleotide specificity of the enzyme and binds the substrate succinate, while the binding sites for coenzyme A and phosphate are found in the alpha subunit. In Bdellovibrio bacteriovorus (strain ATCC 15356 / DSM 50701 / NCIMB 9529 / HD100), this protein is Succinate--CoA ligase [ADP-forming] subunit beta.